Reading from the N-terminus, the 154-residue chain is Small ribosomal subunit protein uS19 (154 aa).

The protein belongs to the universal ribosomal protein uS19 family.

This is Small ribosomal subunit protein uS19 (RPS15) from Oryza sativa subsp. japonica (Rice).